Reading from the N-terminus, the 532-residue chain is tRNA-2-methylthio-N(6)-dimethylallyladenosine synthase 2 (532 aa).

The disordered stretch occupies residues 1–21; the sequence is MTSTVAHGAGSAGPADDAEPM. Residues 24 to 140 form the MTTase N-terminal domain; that stretch reads RTYQVRTYGC…LPALLDRARH (117 aa). Residues Cys-33, Cys-69, Cys-103, Cys-177, Cys-181, and Cys-184 each contribute to the [4Fe-4S] cluster site. The region spanning 163–399 is the Radical SAM core domain; sequence RESAYAAWVS…VELQEQISLE (237 aa). Residues 402–470 form the TRAM domain; that stretch reads RAIVGQRVEL…PHHLIADGGI (69 aa). A disordered region spans residues 510 to 532; it reads TSCGSAGGCGSADGAGSSAGDPQ. Residues 523 to 532 are compositionally biased toward low complexity; that stretch reads GAGSSAGDPQ.

The protein belongs to the methylthiotransferase family. MiaB subfamily. In terms of assembly, monomer. Requires [4Fe-4S] cluster as cofactor.

It is found in the cytoplasm. The catalysed reaction is N(6)-dimethylallyladenosine(37) in tRNA + (sulfur carrier)-SH + AH2 + 2 S-adenosyl-L-methionine = 2-methylsulfanyl-N(6)-dimethylallyladenosine(37) in tRNA + (sulfur carrier)-H + 5'-deoxyadenosine + L-methionine + A + S-adenosyl-L-homocysteine + 2 H(+). Catalyzes the methylthiolation of N6-(dimethylallyl)adenosine (i(6)A), leading to the formation of 2-methylthio-N6-(dimethylallyl)adenosine (ms(2)i(6)A) at position 37 in tRNAs that read codons beginning with uridine. This chain is tRNA-2-methylthio-N(6)-dimethylallyladenosine synthase 2, found in Mycobacterium marinum (strain ATCC BAA-535 / M).